Reading from the N-terminus, the 72-residue chain is Large ribosomal subunit protein bL28 (72 aa).

This sequence belongs to the bacterial ribosomal protein bL28 family.

This is Large ribosomal subunit protein bL28 from Chlorobium chlorochromatii (strain CaD3).